Reading from the N-terminus, the 329-residue chain is D-alanine--D-alanine ligase (329 aa).

In terms of domain architecture, ATP-grasp spans 120-326 (KLWYDAIGIP…FHEFLADCIN (207 aa)). 150–205 (AFDKWGKVFVKAARQGSSVGCYSVTNKQSVSQAVNDAFGYSEQVLVEKSVKPRELE) serves as a coordination point for ATP. Mg(2+) is bound by residues aspartate 280, glutamate 293, and asparagine 295.

The protein belongs to the D-alanine--D-alanine ligase family. Requires Mg(2+) as cofactor. Mn(2+) is required as a cofactor.

Its subcellular location is the cytoplasm. The catalysed reaction is 2 D-alanine + ATP = D-alanyl-D-alanine + ADP + phosphate + H(+). Its pathway is cell wall biogenesis; peptidoglycan biosynthesis. Functionally, cell wall formation. In Vibrio campbellii (strain ATCC BAA-1116), this protein is D-alanine--D-alanine ligase.